Consider the following 64-residue polypeptide: MPKMKTKSGAKKRFKPTASGFKHKHAFKSHILTKMTTKRKRQLRGTSLMHPSDVAKVERMLRVR.

The disordered stretch occupies residues 1–27; the sequence is MPKMKTKSGAKKRFKPTASGFKHKHAF.

This sequence belongs to the bacterial ribosomal protein bL35 family.

The sequence is that of Large ribosomal subunit protein bL35 from Azotobacter vinelandii (strain DJ / ATCC BAA-1303).